The chain runs to 619 residues: 1-deoxy-D-xylulose-5-phosphate synthase (619 aa).

Thiamine diphosphate-binding positions include His74 and 115-117 (GHS). Asp146 contacts Mg(2+). Residues 147–148 (GA), Asn175, Tyr285, and Glu365 contribute to the thiamine diphosphate site. Asn175 contacts Mg(2+).

It belongs to the transketolase family. DXPS subfamily. In terms of assembly, homodimer. The cofactor is Mg(2+). Thiamine diphosphate is required as a cofactor.

The catalysed reaction is D-glyceraldehyde 3-phosphate + pyruvate + H(+) = 1-deoxy-D-xylulose 5-phosphate + CO2. Its pathway is metabolic intermediate biosynthesis; 1-deoxy-D-xylulose 5-phosphate biosynthesis; 1-deoxy-D-xylulose 5-phosphate from D-glyceraldehyde 3-phosphate and pyruvate: step 1/1. Its function is as follows. Catalyzes the acyloin condensation reaction between C atoms 2 and 3 of pyruvate and glyceraldehyde 3-phosphate to yield 1-deoxy-D-xylulose-5-phosphate (DXP). The protein is 1-deoxy-D-xylulose-5-phosphate synthase of Clostridium acetobutylicum (strain ATCC 824 / DSM 792 / JCM 1419 / IAM 19013 / LMG 5710 / NBRC 13948 / NRRL B-527 / VKM B-1787 / 2291 / W).